An 83-amino-acid chain; its full sequence is Exodeoxyribonuclease 7 small subunit (83 aa).

Belongs to the XseB family. In terms of assembly, heterooligomer composed of large and small subunits.

The protein localises to the cytoplasm. The catalysed reaction is Exonucleolytic cleavage in either 5'- to 3'- or 3'- to 5'-direction to yield nucleoside 5'-phosphates.. Its function is as follows. Bidirectionally degrades single-stranded DNA into large acid-insoluble oligonucleotides, which are then degraded further into small acid-soluble oligonucleotides. This Bradyrhizobium diazoefficiens (strain JCM 10833 / BCRC 13528 / IAM 13628 / NBRC 14792 / USDA 110) protein is Exodeoxyribonuclease 7 small subunit.